The primary structure comprises 236 residues: Large ribosomal subunit protein uL1 (236 aa).

This sequence belongs to the universal ribosomal protein uL1 family. As to quaternary structure, part of the 50S ribosomal subunit.

Its function is as follows. Binds directly to 23S rRNA. The L1 stalk is quite mobile in the ribosome, and is involved in E site tRNA release. In terms of biological role, protein L1 is also a translational repressor protein, it controls the translation of the L11 operon by binding to its mRNA. The protein is Large ribosomal subunit protein uL1 of Acidobacterium capsulatum (strain ATCC 51196 / DSM 11244 / BCRC 80197 / JCM 7670 / NBRC 15755 / NCIMB 13165 / 161).